We begin with the raw amino-acid sequence, 219 residues long: Trafficking protein particle complex subunit 4 (219 aa).

The protein belongs to the TRAPP small subunits family. TRAPPC4 subfamily. As to quaternary structure, component of the multisubunit TRAPP (transport protein particle) complex, which includes at least TRAPPC2, TRAPPC2L, TRAPPC3, TRAPPC3L, TRAPPC4, TRAPPC5, TRAPPC8, TRAPPC9, TRAPPC10, TRAPPC11 and TRAPPC12. Interacts with SDC2.

The protein resides in the postsynaptic cell membrane. It is found in the golgi apparatus membrane. It localises to the endoplasmic reticulum. Its subcellular location is the vesicle. In terms of biological role, core component of the TRAPP complexes which has a function of guanine nucleotide exchange factor activity for Rab1 GTPase. Plays a role in vesicular transport from endoplasmic reticulum to Golgi and autophagy. May play a role in dendrite postsynaptic membrane trafficking. The chain is Trafficking protein particle complex subunit 4 from Homo sapiens (Human).